The sequence spans 206 residues: Elongation factor 1-beta (206 aa).

The residue at position 2 (A2) is an N-acetylalanine. K13 participates in a covalent cross-link: Glycyl lysine isopeptide (Lys-Gly) (interchain with G-Cter in ubiquitin). 2 positions are modified to phosphoserine: S31 and S86.

This sequence belongs to the EF-1-beta/EF-1-delta family. The eukaryotic elongation factor 1 complex (eEF1) is probably a heterohexamer. Two trimeric complexes, each composed of eEF1A (TEF1 or TEF2), eEF1Balpha (EFB1) and eEF1Bgamma (CAM1 or TEF4), are probably dimerized via the eF1Bgamma subunits. eEF1Balpha interacts directly with eEF1A. eEF1Balpha and eEF1Bgamma form the eEF1B subcomplex with the GEF activity. S-thiolated in response to oxidative stress, probably inhibiting the protein and causing a reduction in protein synthesis.

The protein operates within protein biosynthesis; polypeptide chain elongation. In terms of biological role, catalytic subunit of the guanine nucleotide exchange factor (GEF) (eEF1B subcomplex) of the eukaryotic elongation factor 1 complex (eEF1). Stimulates the exchange of GDP for GTP on elongation factor 1A (eEF1A), probably by displacing GDP from the nucleotide binding pocket in eEF1A. The 30-fold higher concentration of GTP compared to GDP in cells favors the formation of eEF1A-GTP, which rapidly forms a ternary complex with aminoacyl-tRNA that in turn displaces eEF1B from the complex. The protein is Elongation factor 1-beta (EFB1) of Saccharomyces cerevisiae (strain ATCC 204508 / S288c) (Baker's yeast).